The primary structure comprises 460 residues: Inactive 7-epi-sesquithujene synthase (460 aa).

The Mg(2+) site is built by D308 and D312. The substrate site is built by D308 and D312. Residues 308–312 (DDMFD) carry the DDXXD motif motif.

It belongs to the terpene synthase family. As to quaternary structure, monomer. It depends on Mg(2+) as a cofactor. Mn(2+) is required as a cofactor.

Its subcellular location is the cytoplasm. It functions in the pathway secondary metabolite biosynthesis; terpenoid biosynthesis. Its function is as follows. Non-functional sesquiterpene synthase due to a frameshift removing part of the catalytic site. This is Inactive 7-epi-sesquithujene synthase from Zea mays (Maize).